Consider the following 632-residue polypeptide: Golgin subfamily A member 8H (632 aa).

The segment at Met1–Ser77 is disordered. Coiled coils occupy residues Val110–Arg201 and Glu240–Asp468. Basic and acidic residues-rich tracts occupy residues Lys352–Lys362 and His427–Pro440. Disordered regions lie at residues Lys352–Asn379, Pro423–Ser452, and Leu496–Glu524. The span at Leu508–Gly520 shows a compositional bias: gly residues.

It belongs to the GOLGA8 family.

The polypeptide is Golgin subfamily A member 8H (GOLGA8H) (Homo sapiens (Human)).